Reading from the N-terminus, the 403-residue chain is Protein IQ-DOMAIN 23 (403 aa).

The segment at 1 to 43 (MGFFGRLFGSKKKSDKAASSRDKRRWSFTTRSSNSSKRAPAVT) is disordered. The Nuclear localization signal motif lies at 10–17 (SKKKSDKA). The span at 27 to 43 (SFTTRSSNSSKRAPAVT) shows a compositional bias: polar residues. Residues 115 to 133 (QENIAAMKIQSAFRGYLAR) are calmodulin-binding. IQ domains lie at 116-144 (ENIAAMKIQSAFRGYLARRALRALKALVK) and 145-167 (LQALVRGHIVRKQTADMLRRMQT). Disordered stretches follow at residues 176–208 (RARASRSSHSSASFHSSTALLFPSSSSSPRSLH), 242–301 (ILEV…PTSR), and 381–403 (GGDSDRLNRNQSAKSRMHSSFLV). A compositionally biased stretch (basic and acidic residues) spans 257 to 267 (LRSERNNESPR).

It belongs to the IQD family. In terms of assembly, binds to multiple calmodulin (CaM) in the presence of Ca(2+) and CaM-like proteins.

Its subcellular location is the nucleus. The protein resides in the nucleolus. It is found in the cytoplasm. The protein localises to the cytoskeleton. It localises to the cell membrane. In terms of biological role, may be involved in cooperative interactions with calmodulins or calmodulin-like proteins. Recruits calmodulin proteins to microtubules, thus being a potential scaffold in cellular signaling and trafficking. May associate with nucleic acids and regulate gene expression at the transcriptional or post-transcriptional level. This Arabidopsis thaliana (Mouse-ear cress) protein is Protein IQ-DOMAIN 23.